A 377-amino-acid chain; its full sequence is Capsule polysaccharide export inner-membrane protein BexC (377 aa).

The next 2 membrane-spanning stretches (helical) occupy residues 23 to 43 and 351 to 371; these read LFGL…GLFA and IIAT…LIAS.

This sequence belongs to the BexC/CtrB/KpsE family.

It is found in the cell inner membrane. Its function is as follows. May form an ATP-driven capsule polysaccharide export apparatus, in association with the BexA, BexB and BexD proteins. In Haemophilus influenzae, this protein is Capsule polysaccharide export inner-membrane protein BexC (bexC).